The sequence spans 430 residues: FAD-dependent monooxygenase asL4 (430 aa).

Residues 11 to 14 (GGIA), 33 to 34 (ER), Arg108, and Tyr278 each bind FAD.

This sequence belongs to the aromatic-ring hydroxylase family. Requires FAD as cofactor.

The protein operates within secondary metabolite biosynthesis; terpenoid biosynthesis. Functionally, flavin-dependent monooxygenase; part of the gene cluster that mediates the biosynthesis of xenovulene A, an unusual meroterpenoid that has potent inhibitory effects on the human gamma-aminobutyrate A (GABAA) benzodiazepine receptor. The first step of xenovulene A biosynthesis is the biosynthesis of 3-methylorcinaldehyde performed by the non-reducing polyketide synthase aspks1. The salicylate hydroxylase asL1 then catalyzes the oxidative dearomatization of 3-methylorcinaldehyde to yield a dearomatized hydroxycyclohexadione. The 2-oxoglutarate-dependent dioxygenase asL3 further catalyzes the oxidative ring expansion to provide the first tropolone metabolite. The cytochrome P450 monooxygenase asR2 allows the synthesis of tropolone hemiacetal. In parallel, a previously unrecognised class of terpene cyclase, asR6, produces alpha-humulene from farnesylpyrophosphate (FPP). The putative Diels-Alderase asR5 probably catalyzes the formation of the tropolone-humulene skeleton by linking humulene and the polyketide moiety. Oxidative-ring contractions catalyzed by asL4 and asL6 then processively remove carbon atoms from the polyketide to yield xenovulene A. This chain is FAD-dependent monooxygenase asL4, found in Sarocladium schorii (Acremonium strictum (strain IMI 501407)).